A 421-amino-acid polypeptide reads, in one-letter code: ATP-dependent RNA helicase RhlB (421 aa).

Positions 9-37 match the Q motif motif; it reads QKFSDFALHPQVVEALEKKRFYNCTPIQA. The Helicase ATP-binding domain occupies 40 to 219; the sequence is LPLTLAGRDV…FEQMNNAEYV (180 aa). 53–60 serves as a coordination point for ATP; the sequence is AQTGTGKT. The short motif at 165–168 is the DEAD box element; the sequence is DEAD. In terms of domain architecture, Helicase C-terminal spans 245–390; it reads RLLQTLIEEE…VSKYNPEALM (146 aa). Positions 396 to 421 are disordered; it reads PLRLTRSRPGNGPRRAGAPRNRRRSG. The segment covering 402-414 has biased composition (low complexity); it reads SRPGNGPRRAGAP.

Belongs to the DEAD box helicase family. RhlB subfamily. As to quaternary structure, component of the RNA degradosome, which is a multiprotein complex involved in RNA processing and mRNA degradation.

The protein localises to the cytoplasm. It catalyses the reaction ATP + H2O = ADP + phosphate + H(+). Its function is as follows. DEAD-box RNA helicase involved in RNA degradation. Has RNA-dependent ATPase activity and unwinds double-stranded RNA. This is ATP-dependent RNA helicase RhlB from Salmonella dublin (strain CT_02021853).